The primary structure comprises 65 residues: Large ribosomal subunit protein bL35 (65 aa).

Residues 24–48 are disordered; sequence RRKAGKSHLLEHKSSDKKRSMSKTT. A compositionally biased stretch (basic and acidic residues) spans 31–42; sequence HLLEHKSSDKKR.

The protein belongs to the bacterial ribosomal protein bL35 family.

This is Large ribosomal subunit protein bL35 from Nostoc punctiforme (strain ATCC 29133 / PCC 73102).